We begin with the raw amino-acid sequence, 369 residues long: Phosphoribosyl pyrophosphate synthase-associated protein 2 (369 aa).

Residue Met1 is modified to N-acetylmethionine. Phosphothreonine is present on Thr5. Residues Ser219, Ser227, and Ser233 each carry the phosphoserine modification.

This sequence belongs to the ribose-phosphate pyrophosphokinase family. Binds to PRPS1 and PRPS2. In terms of tissue distribution, ubiquitous.

Functionally, seems to play a negative regulatory role in 5-phosphoribose 1-diphosphate synthesis. This is Phosphoribosyl pyrophosphate synthase-associated protein 2 (PRPSAP2) from Homo sapiens (Human).